Here is a 166-residue protein sequence, read N- to C-terminus: Large ribosomal subunit protein uL10 (166 aa).

The protein belongs to the universal ribosomal protein uL10 family. In terms of assembly, part of the ribosomal stalk of the 50S ribosomal subunit. The N-terminus interacts with L11 and the large rRNA to form the base of the stalk. The C-terminus forms an elongated spine to which L12 dimers bind in a sequential fashion forming a multimeric L10(L12)X complex.

In terms of biological role, forms part of the ribosomal stalk, playing a central role in the interaction of the ribosome with GTP-bound translation factors. The chain is Large ribosomal subunit protein uL10 from Alkaliphilus metalliredigens (strain QYMF).